The chain runs to 383 residues: 4-hydroxy-3-methylbut-2-en-1-yl diphosphate synthase (flavodoxin) (383 aa).

4 residues coordinate [4Fe-4S] cluster: C277, C280, C312, and E319.

The protein belongs to the IspG family. The cofactor is [4Fe-4S] cluster.

The enzyme catalyses (2E)-4-hydroxy-3-methylbut-2-enyl diphosphate + oxidized [flavodoxin] + H2O + 2 H(+) = 2-C-methyl-D-erythritol 2,4-cyclic diphosphate + reduced [flavodoxin]. It functions in the pathway isoprenoid biosynthesis; isopentenyl diphosphate biosynthesis via DXP pathway; isopentenyl diphosphate from 1-deoxy-D-xylulose 5-phosphate: step 5/6. In terms of biological role, converts 2C-methyl-D-erythritol 2,4-cyclodiphosphate (ME-2,4cPP) into 1-hydroxy-2-methyl-2-(E)-butenyl 4-diphosphate. This Caulobacter vibrioides (strain ATCC 19089 / CIP 103742 / CB 15) (Caulobacter crescentus) protein is 4-hydroxy-3-methylbut-2-en-1-yl diphosphate synthase (flavodoxin).